A 200-amino-acid chain; its full sequence is Isochorismatase family protein 2A (200 aa).

This sequence belongs to the isochorismatase family.

In Dictyostelium discoideum (Social amoeba), this protein is Isochorismatase family protein 2A.